The sequence spans 261 residues: Acetylglutamate kinase (261 aa).

Substrate is bound by residues 45–46, Arg67, and Asn162; that span reads GG.

It belongs to the acetylglutamate kinase family. ArgB subfamily.

The protein localises to the cytoplasm. It carries out the reaction N-acetyl-L-glutamate + ATP = N-acetyl-L-glutamyl 5-phosphate + ADP. It functions in the pathway amino-acid biosynthesis; L-arginine biosynthesis; N(2)-acetyl-L-ornithine from L-glutamate: step 2/4. Functionally, catalyzes the ATP-dependent phosphorylation of N-acetyl-L-glutamate. This chain is Acetylglutamate kinase, found in Bacteroides fragilis (strain ATCC 25285 / DSM 2151 / CCUG 4856 / JCM 11019 / LMG 10263 / NCTC 9343 / Onslow / VPI 2553 / EN-2).